A 92-amino-acid polypeptide reads, in one-letter code: Small ribosomal subunit protein uS19 (92 aa).

Belongs to the universal ribosomal protein uS19 family.

Functionally, protein S19 forms a complex with S13 that binds strongly to the 16S ribosomal RNA. This chain is Small ribosomal subunit protein uS19, found in Mesorhizobium japonicum (strain LMG 29417 / CECT 9101 / MAFF 303099) (Mesorhizobium loti (strain MAFF 303099)).